A 440-amino-acid polypeptide reads, in one-letter code: Golgi-associated RAB2 interactor protein 2 (440 aa).

This sequence belongs to the GARIN family. Interacts with CALM1. Expressed in testis (at protein level).

The protein localises to the cell projection. The protein resides in the cilium. It localises to the flagellum. Its function is as follows. Seems to play a role in sperm motility. The protein is Golgi-associated RAB2 interactor protein 2 of Mus musculus (Mouse).